Reading from the N-terminus, the 291-residue chain is Pituitary-specific positive transcription factor 1 (291 aa).

A 9aaTAD motif is present at residues 5-13 (PFTSTDTFI). The 75-residue stretch at 124-198 (MDSPEIRELE…ILFKWLEEAE (75 aa)) folds into the POU-specific domain. The homeobox DNA-binding region spans 214–273 (KRKRRTTISIAAKDALERHFGEQNKPSSQEILRMAEELNLEKEVVRVWFCNRRQREKRVK).

This sequence belongs to the POU transcription factor family. Class-1 subfamily. As to quaternary structure, interacts with PITX1. Interacts with LHX3. Interacts with ELK1.

It is found in the nucleus. Transcription factor involved in the specification of the lactotrope, somatotrope, and thyrotrope phenotypes in the developing anterior pituitary. Activates growth hormone and prolactin genes. Specifically binds to the consensus sequence 5'-TAAAT-3'. This chain is Pituitary-specific positive transcription factor 1 (POU1F1), found in Ovis aries (Sheep).